The primary structure comprises 119 residues: MARVKRGVTSHAKHKKVFKAAKGFYGRRKNTIRAAKSAVERSMQYNYRDRKVKKRTFRALWIQRINAGVRELGMTYGRFIDGLGKAGIEVDRKVLSDIAVHEPETLKALVEKAQAALAA.

Belongs to the bacterial ribosomal protein bL20 family.

Binds directly to 23S ribosomal RNA and is necessary for the in vitro assembly process of the 50S ribosomal subunit. It is not involved in the protein synthesizing functions of that subunit. This Azorhizobium caulinodans (strain ATCC 43989 / DSM 5975 / JCM 20966 / LMG 6465 / NBRC 14845 / NCIMB 13405 / ORS 571) protein is Large ribosomal subunit protein bL20.